The following is a 380-amino-acid chain: MSCPYAGNGNEHDDGAVPLSNEVGKIYGEYLMLDKLLDAQCMLSMEDKRPVHDEHLFIITHQAYELWFKQIIFEFDSIRVMLDEEVIDETKTLEIVKRLNRVVLILKLLVDQVPILETMTPLDFMDFRKYLAPASGFQSLQFRLIENKLGVLTEQRVKYNQKYSDVFGNDERALHAIRSSEDGPSLLVLVQRWLERTPGLEEEGFNFWSKFQQSVDQFLAAQVQSALLEPVEWAKNYRLMDIEKRREVYRSIFDPAVHEALVKRGDRRFSHRALQGAIMITFYRDEPRFSQPHQLLTLLMDIDSLITKWRYNHVIMVQRMIGSQQLGTGGSSGYQYLRSTLSDRYKVFLDLFNLSTFLIPREAIPPLDETIRKKLVHKSV.

Substrate contacts are provided by residues 57-61 (FIITH) and R128. A heme-binding site is contributed by H313. T328 provides a ligand contact to substrate.

The protein belongs to the tryptophan 2,3-dioxygenase family. In terms of assembly, homotetramer. Dimer of dimers. Requires heme as cofactor.

The catalysed reaction is L-tryptophan + O2 = N-formyl-L-kynurenine. The protein operates within amino-acid degradation; L-tryptophan degradation via kynurenine pathway; L-kynurenine from L-tryptophan: step 1/2. Its pathway is pigment biosynthesis; ommochrome biosynthesis. Its function is as follows. Heme-dependent dioxygenase that catalyzes the oxidative cleavage of the L-tryptophan (L-Trp) pyrrole ring and converts L-tryptophan to N-formyl-L-kynurenine. Catalyzes the oxidative cleavage of the indole moiety. This chain is Tryptophan 2,3-dioxygenase, found in Drosophila virilis (Fruit fly).